A 2448-amino-acid chain; its full sequence is Non-reducing polyketide synthase mapC (2448 aa).

The tract at residues 14–226 is N-terminal acylcarrier protein transacylase domain (SAT); the sequence is VLFGPQCPDI…HHEAHREGIQ (213 aa). The tract at residues 330–350 is disordered; sequence GFSNESPQPSTASLSNSVQTF. Residues 359 to 775 form the Ketosynthase family 3 (KS3) domain; sequence ASPIAITGMA…GSNAALIVKE (417 aa). Catalysis depends on for beta-ketoacyl synthase activity residues C524, H659, and H698. Residues 885-1188 are malonyl-CoA:ACP transacylase (MAT) domain; that stretch reads LCFGGQNGLT…HKIDLGGSSG (304 aa). Catalysis depends on S972, which acts as the For acyl/malonyl transferase activity. The segment at 1256–1388 is N-terminal hotdog fold; that stretch reads GQEAGLLCQL…GTVCLHQERS (133 aa). Positions 1256–1565 constitute a PKS/mFAS DH domain; the sequence is GQEAGLLCQL…FTSVSIRSLT (310 aa). The tract at residues 1261 to 1564 is product template (PT) domain; sequence LLCQLSESPD…RFTSVSIRSL (304 aa). H1290 functions as the Proton acceptor; for dehydratase activity in the catalytic mechanism. A C-terminal hotdog fold region spans residues 1414–1565; it reads ASNGLKGSTV…FTSVSIRSLT (152 aa). D1471 serves as the catalytic Proton donor; for dehydratase activity. One can recognise a Carrier domain in the interval 1610–1684; that stretch reads AKDLATVQEM…GLVEHIFPGH (75 aa). At S1644 the chain carries O-(pantetheine 4'-phosphoryl)serine. The tract at residues 1841-2076 is methyltransferase (CMeT) domain; sequence PYALEHDLLQ…GFEWVDWTNN (236 aa). Catalysis depends on for thioesterase activity residues S2227, D2385, and H2417.

It is found in the cytoplasm. Its subcellular location is the cytosol. It carries out the reaction 3 malonyl-CoA + acetyl-CoA + S-adenosyl-L-methionine + H(+) = 5-methylorsellinate + S-adenosyl-L-homocysteine + 3 CO2 + 4 CoA. It functions in the pathway secondary metabolite biosynthesis; terpenoid biosynthesis. In terms of biological role, non-reducing polyketide synthase; part of the gene cluster that mediates the biosynthesis of mycophenolic acid (MPA), the first isolated antibiotic natural product in the world obtained from a culture of Penicillium brevicompactum in 1893. MpaC catalyzes the synthesis of 5-methylorsellinic acid (5MOA) via the condensation of 1 acetyl-CoA starter unit with 3 malonyl-CoA units and one methylation step. The first step of the pathway is the synthesis of 5-methylorsellinic acid (5MOA) by the cytosolic polyketide synthase mpaC. 5MOA is then converted to the phthalide compound 5,7-dihydroxy-4,6-dimethylphthalide (DHMP) by the endoplasmic reticulum-bound cytochrome P450 monooxygenase mpaDE. MpaDE first catalyzes hydroxylation of 5-MOA to 4,6-dihydroxy-2-(hydroxymethyl)-3-methylbenzoic acid (DHMB). MpaDE then acts as a lactone synthase that catalyzes the ring closure to convert DHMB into DHMP. The next step is the prenylation of DHMP by the Golgi apparatus-associated prenyltransferase mpaA to yield farnesyl-DHMP (FDHMP). The ER-bound oxygenase mpaB then mediates the oxidative cleavage the C19-C20 double bond in FDHMP to yield FDHMP-3C via a mycophenolic aldehyde intermediate. The O-methyltransferase mpaG catalyzes the methylation of FDHMP-3C to yield MFDHMP-3C. After the cytosolic methylation of FDHMP-3C, MFDHMP-3C enters into peroxisomes probably via free diffusion due to its low molecular weight. Upon a peroxisomal CoA ligation reaction, catalyzed by a beta-oxidation component enzyme acyl-CoA ligase ACL891, MFDHMP-3C-CoA would then be restricted to peroxisomes for the following beta-oxidation pathway steps. The peroxisomal beta-oxidation machinery than converts MFDHMP-3C-CoA into MPA_CoA, via a beta-oxidation chain-shortening process. Finally mpaH acts as a peroxisomal acyl-CoA hydrolase with high substrate specificity toward MPA-CoA to release the final product MPA. The polypeptide is Non-reducing polyketide synthase mapC (Penicillium brevicompactum).